Consider the following 104-residue polypeptide: BLOC-1-related complex subunit 7 (104 aa).

Belongs to the BORCS7 family.

The protein resides in the lysosome membrane. In terms of biological role, as part of a BORC-like complex may play a role in lysosomes movement and localization at the cell periphery. Associated with the cytosolic face of lysosomes, this complex may couple lysosomes to microtubule plus-end-directed kinesin motor. In Xenopus tropicalis (Western clawed frog), this protein is BLOC-1-related complex subunit 7.